We begin with the raw amino-acid sequence, 116 residues long: Flagellar transcriptional regulator FlhD (116 aa).

The protein belongs to the FlhD family. In terms of assembly, homodimer; disulfide-linked. Forms a heterohexamer composed of two FlhC and four FlhD subunits. Each FlhC binds a FlhD dimer, forming a heterotrimer, and a hexamer assembles by dimerization of two heterotrimers.

It is found in the cytoplasm. In terms of biological role, functions in complex with FlhC as a master transcriptional regulator that regulates transcription of several flagellar and non-flagellar operons by binding to their promoter region. Activates expression of class 2 flagellar genes, including fliA, which is a flagellum-specific sigma factor that turns on the class 3 genes. Also regulates genes whose products function in a variety of physiological pathways. The chain is Flagellar transcriptional regulator FlhD from Pectobacterium carotovorum subsp. carotovorum (strain PC1).